The following is an 89-amino-acid chain: uncharacterized protein (89 aa).

This is an uncharacterized protein from Sinorhizobium fredii (strain NBRC 101917 / NGR234).